Here is a 329-residue protein sequence, read N- to C-terminus: Src kinase-associated phosphoprotein 2 (329 aa).

Residues 58 to 95 (YAEDSEEEEDWDSNEGGSLQSERTDKDEEACEGAQQAP) form a disordered region. Residues 61-70 (DSEEEEDWDS) are compositionally biased toward acidic residues. The region spanning 104 to 207 (SVFKAGYLEK…WVKQIDFVLK (104 aa)) is the PH domain. The segment at 240–263 (EDMPSPPPKVEPVSKHPPPTPAVD) is disordered. Positions 243–260 (PSPPPKVEPVSKHPPPTP) are enriched in pro residues. An SH3 domain is found at 267–328 (DYANYYQGLW…PKDYLMELYA (62 aa)).

This sequence belongs to the SKAP family. Phosphorylated on tyrosines.

The protein resides in the cytoplasm. Its function is as follows. May be involved in B-cell and macrophage adhesion processes. May play a role in src signaling pathway. This Takifugu rubripes (Japanese pufferfish) protein is Src kinase-associated phosphoprotein 2 (skap2).